The sequence spans 241 residues: Probable transcriptional regulatory protein LHK_02347 (241 aa).

The protein belongs to the TACO1 family.

The protein resides in the cytoplasm. This is Probable transcriptional regulatory protein LHK_02347 from Laribacter hongkongensis (strain HLHK9).